A 245-amino-acid chain; its full sequence is uncharacterized protein (245 aa).

The first 20 residues, 1-20 (MIKQTIVALLLSVGASSVFA), serve as a signal peptide directing secretion.

The protein to E.coli YmcB.

This is an uncharacterized protein from Escherichia coli (strain K12).